The sequence spans 213 residues: Ribonuclease T (213 aa).

The Exonuclease domain occupies 28 to 202 (VVVDVETGGF…YDTEQTARLF (175 aa)). Mg(2+)-binding residues include D31, E33, H189, and D194. The active-site Proton donor/acceptor is H189.

This sequence belongs to the RNase T family. Homodimer. Mg(2+) serves as cofactor.

In terms of biological role, trims short 3' overhangs of a variety of RNA species, leaving a one or two nucleotide 3' overhang. Responsible for the end-turnover of tRNA: specifically removes the terminal AMP residue from uncharged tRNA (tRNA-C-C-A). Also appears to be involved in tRNA biosynthesis. The sequence is that of Ribonuclease T from Xanthomonas euvesicatoria pv. vesicatoria (strain 85-10) (Xanthomonas campestris pv. vesicatoria).